The following is a 118-amino-acid chain: Large ribosomal subunit protein uL18 (118 aa).

Belongs to the universal ribosomal protein uL18 family. Part of the 50S ribosomal subunit; part of the 5S rRNA/L5/L18/L25 subcomplex. Contacts the 5S and 23S rRNAs.

In terms of biological role, this is one of the proteins that bind and probably mediate the attachment of the 5S RNA into the large ribosomal subunit, where it forms part of the central protuberance. The sequence is that of Large ribosomal subunit protein uL18 from Rickettsia peacockii (strain Rustic).